Consider the following 339-residue polypeptide: Annexin A2 (339 aa).

Serine 2 is modified (N-acetylserine). Residues 2 to 24 (STVHEILCKLSLEGDHSTPPSAY) form an S100A10-binding site region. The residue at position 24 (tyrosine 24) is a Phosphotyrosine; by SRC. Serine 26 bears the Phosphoserine; by PKC mark. Annexin repeat units lie at residues 33 to 104 (FDAE…GLLK) and 105 to 176 (TPAQ…ALAK). Lysine 49 carries the post-translational modification N6-acetyllysine; alternate. Lysine 49 participates in a covalent cross-link: Glycyl lysine isopeptide (Lys-Gly) (interchain with G-Cter in SUMO1); alternate. A Glycyl lysine isopeptide (Lys-Gly) (interchain with G-Cter in SUMO2); alternate cross-link involves residue lysine 49. The residue at position 152 (lysine 152) is an N6-acetyllysine. Serine 184 is subject to Phosphoserine. 2 Annexin repeats span residues 189-261 (ELID…NLVQ) and 265-336 (NKPL…YLCG). Tyrosine 199 carries the post-translational modification Phosphotyrosine. The residue at position 227 (lysine 227) is an N6-acetyllysine.

This sequence belongs to the annexin family. In terms of assembly, heterotetramer containing 2 light chains of S100A10/p11 and 2 heavy chains of ANXA2/p36. Interacts with ATP1B1. Interacts with DYSF. Interacts with COCH. Interacts (via repeat Annexin 1) with PCSK9 (via the C-terminal domain); the interaction inhibits the degradation of LDLR. Interacts with CEACAM1 (via the cytoplasmic domain); this interaction is regulated by phosphorylation of CEACAM1. Interacts with APPL2 and APPL1; targets APPL2 to endosomes and acting in parallel to RAB5A. Interacts with S100A4. May interact with UBAP2. In terms of processing, ISGylated. As to expression, expressed strongly in velvet antler reserve mesenchyme.

Its subcellular location is the secreted. It localises to the extracellular space. The protein resides in the extracellular matrix. It is found in the basement membrane. Calcium-regulated membrane-binding protein whose affinity for calcium is greatly enhanced by anionic phospholipids. It binds two calcium ions with high affinity. May be involved in heat-stress response. Inhibits PCSK9-enhanced LDLR degradation, probably reduces PCSK9 protein levels via a translational mechanism but also competes with LDLR for binding with PCSK9. Binds to endosomes damaged by phagocytosis of particulate wear debris and participates in endosomal membrane stabilization, thereby limiting NLRP3 inflammasome activation. Required for endothelial cell surface plasmin generation and may support fibrinolytic surveillance and neoangiogenesis. The protein is Annexin A2 (ANXA2) of Cervus elaphus (Red deer).